We begin with the raw amino-acid sequence, 287 residues long: Transmembrane protein 163 (287 aa).

Positions 1 to 63 (METAAGSERR…ESGQFSDGLE (63 aa)) are disordered. Residues 1 to 86 (METAAGSERR…HEAQNYRKKA (86 aa)) lie on the Cytoplasmic side of the membrane. A phosphoserine mark is found at serine 11, serine 53, serine 55, and serine 59. The interval 40-70 (EPPQPEEERQLRISESGQFSDGLEDRGLLES) is required for interaction with MCOLN1. Residues 87-107 (LWVSWFSIIVTLALAVAAFTV) form a helical membrane-spanning segment. The Extracellular portion of the chain corresponds to 108-114 (SVMRYSA). A helical transmembrane segment spans residues 115 to 135 (SAFGFAFDAILDVLSSAIVLW). Topologically, residues 136 to 148 (RYSNAAAVHSAHR) are cytoplasmic. The helical transmembrane segment at 149-169 (EYIACVILGVIFLLSSVCIVV) threads the bilayer. Topologically, residues 170–185 (KAIHDLSTKLLPEVDD) are extracellular. Residues 186 to 206 (FLFSVSILSGILCSILAVLKF) form a helical membrane-spanning segment. Residues 207–215 (MLGKVLTSR) lie on the Cytoplasmic side of the membrane. A helical transmembrane segment spans residues 216 to 236 (ALITDGFNSLVGGVMGFSILL). The Extracellular segment spans residues 237-253 (SAEVFKHNSAVWYLDGS). A helical transmembrane segment spans residues 254-274 (IGVLIGLTIFAYGVKLLIDMV). Topologically, residues 275-287 (PRVRQTRHYEMFE) are cytoplasmic.

Belongs to the TMEM163 family. Homodimer. Interacts with MCOLN1/TRPML1. Interacts with SLC30A1, SLC30A2, SLC30A3 and SLC30A4.

The protein localises to the cytoplasmic vesicle. It is found in the secretory vesicle. The protein resides in the synaptic vesicle membrane. It localises to the early endosome membrane. Its subcellular location is the late endosome membrane. The protein localises to the lysosome membrane. It is found in the cell membrane. It catalyses the reaction Zn(2+)(in) = Zn(2+)(out). Functionally, zinc ion transporter that mediates zinc efflux and plays a crucial role in intracellular zinc homeostasis. Binds the divalent cations Zn(2+), Ni(2+), and to a minor extent Cu(2+). Is a functional modulator of P2X purinoceptors, including P2RX1, P2RX3, P2RX4 and P2RX7. Plays a role in central nervous system development and is required for myelination, and survival and proliferation of oligodendrocytes. The chain is Transmembrane protein 163 (TMEM163) from Bos taurus (Bovine).